We begin with the raw amino-acid sequence, 69 residues long: Conotoxin Eb6.20 (69 aa).

Positions 1–17 are cleaved as a signal peptide; the sequence is VLIIAVLFLTACQLTTA. Positions 18-41 are excised as a propeptide; it reads ETYSRGRQKHRARRSTDKNSKWTR. Cystine bridges form between Cys-43–Cys-57, Cys-50–Cys-61, and Cys-56–Cys-68.

Belongs to the conotoxin O1 superfamily. As to expression, expressed by the venom duct.

It is found in the secreted. This is Conotoxin Eb6.20 (E1) from Conus ebraeus (Hebrew cone).